The following is a 984-amino-acid chain: MSVLGEYERHCDSINSDFGSESGGGGDSGPGPSAVPGPRAGGGAAEQEELHYIPIRVLGRGAFGEATLYRRTEDDSLVVWKEVDLTRLSEKERRDALNEIVILALLQHDNIIAYYNHFMDNTTLLIELEYCNGGNLYDKILRQKDKLFEEEMVVWYLFQIVSAVSCIHKAGILHRDIKTLNIFLTKANLIKLGDYGLAKKLNSEYSMAETLVGTPYYMSPELCQGVKYNFKSDIWAVGCVIFELLTLKRTFDATNPLNLCVKIVQGIRAMEVDSSQYSLELIQLVHACLDQDPEQRPAADALLDLPLLRTRRREMEEKVTLLNAPTKRPRSSTVTEAPIAVVTSRTSEVYVWGGGKSTPQKLDVIKSGCSARQVCAGNTHFAVVTVEKELYTWVNMQGGTKLHGQLGHGDKASYRQPKHVEKLQGKAIHQVSCGDDFTVCVTDEGQLYAFGSDYYGCMGVDKVSGPEVLEPMQLNFFLSNPVEQVSCGDNHVVVLTRNKEVYSWGCGEYGRLGLDSEEDYYTPQRVDVPKALIIVAVQCGCDGTFLLTQSGKVLACGLNEFNKLGLNQCMSGIINHEAYHEVPYTTSFTLAKQLSFYKIRTIAPGKTHTAAIDERGRLLTFGCNKCGQLGVGNYKKRLGINLLGGPLGGKQVIRVSCGDEFTIAATDDNHIFAWGNGGNGRLAMTPTERPHGSDICTSWPRPIFGSLHHVPDLSCRGWHTILIVEKVLNSKTIRSNSSGLSIGTVVQSSSPGGGIGGGGGGGGGGGGEEEDSQQESETPDPSGGFRGTMEADRGMEGLISPTEAVGNSCGASSSCPGWLRKELENAEFIPMPDSPAPLSAAFSQSEKDTLPYEELQGLKVASEVPPEPQRAAGAWPPRLDPAVPCVGKALTSAACACSALQVEVDRLQALVLKCLEEQQKLQQENLQMFTQLQKLNKKLEGGQQVGMHSRGTQTAKEEMEMDPKPDLDSESWCLLGTDSCRPSL.

The residue at position 2 (serine 2) is an N-acetylserine. 4 positions are modified to phosphoserine: serine 2, serine 13, serine 16, and serine 20. The segment at 14 to 43 (INSDFGSESGGGGDSGPGPSAVPGPRAGGG) is disordered. Tyrosine 52 is subject to Phosphotyrosine. A Protein kinase domain is found at 52 to 308 (YIPIRVLGRG…ADALLDLPLL (257 aa)). 58–66 (LGRGAFGEA) is an ATP binding site. A Phosphoserine modification is found at serine 76. Lysine 81 serves as a coordination point for ATP. The active-site Proton acceptor is the aspartate 176. Threonine 210 carries the phosphothreonine; by autocatalysis modification. Threonine 254 is subject to Phosphothreonine. A Phosphoserine modification is found at serine 331. Residue threonine 333 is modified to Phosphothreonine. 6 RCC1 repeats span residues 388-444 (KELY…VTDE), 445-498 (GQLY…LTRN), 499-550 (KEVY…LTQS), 551-615 (GKVL…IDER), 616-668 (GRLL…ATDD), and 669-726 (NHIF…IVEK). An interaction with NEK6 region spans residues 732–896 (TIRSNSSGLS…GKALTSAACA (165 aa)). Serine 741 carries the phosphoserine modification. A disordered region spans residues 744–790 (TVVQSSSPGGGIGGGGGGGGGGGGEEEDSQQESETPDPSGGFRGTME). Positions 751 to 766 (PGGGIGGGGGGGGGGG) are enriched in gly residues. The segment covering 767-778 (GEEEDSQQESET) has biased composition (acidic residues). 2 positions are modified to phosphoserine: serine 808 and serine 839. Threonine 891 is subject to Phosphothreonine. Positions 896–945 (ACSALQVEVDRLQALVLKCLEEQQKLQQENLQMFTQLQKLNKKLEGGQQV) form a coiled coil. The tract at residues 940-984 (EGGQQVGMHSRGTQTAKEEMEMDPKPDLDSESWCLLGTDSCRPSL) is disordered. Serine 949 bears the Phosphoserine mark. Residues 955–967 (AKEEMEMDPKPDL) are compositionally biased toward basic and acidic residues. Serine 983 carries the post-translational modification Phosphoserine.

This sequence belongs to the protein kinase superfamily. NEK Ser/Thr protein kinase family. NIMA subfamily. In terms of assembly, homodimer; homodimerization is required to activate NEK7. Binds to Ran GTPase. Has a greater affinity for Ran-GDP over Ran-GTP. Interacts with SSRP1 and SUPT16H, the 2 subunits of the FACT complex. Interacts with DYNLL1; phosphorylation at Ser-949 strongly reduces DYNLL1 binding. The cofactor is Mg(2+). Post-translationally, autophosphorylated on serine and threonine residues. When complexed with FACT, exhibits markedly elevated phosphorylation on Thr-210. During mitosis, not phosphorylated on Thr-210. Phosphorylated by CDK1 in vitro.

The protein localises to the cytoplasm. Its subcellular location is the nucleus. The enzyme catalyses L-seryl-[protein] + ATP = O-phospho-L-seryl-[protein] + ADP + H(+). The catalysed reaction is L-threonyl-[protein] + ATP = O-phospho-L-threonyl-[protein] + ADP + H(+). Its activity is regulated as follows. Activated during mitosis by intramolecular autophosphorylation. Activity and autophosphorylation is activated by manganese &gt;&gt; magnesium ions. It is not cell-cycle regulated but activity is higher in G0-arrested cells. In terms of biological role, pleiotropic regulator of mitotic progression, participating in the control of spindle dynamics and chromosome separation. Phosphorylates different histones, myelin basic protein, beta-casein, and BICD2. Phosphorylates histone H3 on serine and threonine residues and beta-casein on serine residues. Important for G1/S transition and S phase progression. Phosphorylates NEK6 and NEK7 and stimulates their activity by releasing the autoinhibitory functions of Tyr-108 and Tyr-97 respectively. The sequence is that of Serine/threonine-protein kinase Nek9 from Mus musculus (Mouse).